A 324-amino-acid polypeptide reads, in one-letter code: dITP/XTP pyrophosphatase (324 aa).

The tract at residues Met-1 to Val-126 is unknown. The segment at Leu-127 to Gln-324 is NTP pyrophosphatase. Thr-131–Lys-136 provides a ligand contact to substrate. Asp-193 functions as the Proton acceptor in the catalytic mechanism. Asp-193 contributes to the Mg(2+) binding site. Residues Ser-194, Phe-277–Asp-280, Lys-300, and His-305–Arg-306 each bind substrate.

This sequence belongs to the HAM1 NTPase family. Homodimer. The cofactor is Mg(2+).

It catalyses the reaction XTP + H2O = XMP + diphosphate + H(+). The catalysed reaction is dITP + H2O = dIMP + diphosphate + H(+). The enzyme catalyses ITP + H2O = IMP + diphosphate + H(+). Functionally, pyrophosphatase that catalyzes the hydrolysis of nucleoside triphosphates to their monophosphate derivatives, with a high preference for the non-canonical purine nucleotides XTP (xanthosine triphosphate), dITP (deoxyinosine triphosphate) and ITP. Seems to function as a house-cleaning enzyme that removes non-canonical purine nucleotides from the nucleotide pool, thus preventing their incorporation into DNA/RNA and avoiding chromosomal lesions. The polypeptide is dITP/XTP pyrophosphatase (Streptococcus thermophilus (strain ATCC BAA-250 / LMG 18311)).